Consider the following 316-residue polypeptide: N-acetyl-gamma-glutamyl-phosphate reductase (316 aa).

Cys136 is an active-site residue.

The protein belongs to the NAGSA dehydrogenase family. Type 1 subfamily.

Its subcellular location is the cytoplasm. It carries out the reaction N-acetyl-L-glutamate 5-semialdehyde + phosphate + NADP(+) = N-acetyl-L-glutamyl 5-phosphate + NADPH + H(+). It participates in amino-acid biosynthesis; L-arginine biosynthesis; N(2)-acetyl-L-ornithine from L-glutamate: step 3/4. Its function is as follows. Catalyzes the NADPH-dependent reduction of N-acetyl-5-glutamyl phosphate to yield N-acetyl-L-glutamate 5-semialdehyde. This chain is N-acetyl-gamma-glutamyl-phosphate reductase, found in Xanthomonas campestris pv. campestris (strain 8004).